The primary structure comprises 95 residues: Scytovirin (95 aa).

Positions 3-41 (GPTYCWNEANNPGGPNRCSNNKQCDGARTCSSSGFCQGT) are SD1. Cystine bridges form between C7–C55, C20–C32, C26–C38, C68–C80, and C74–C86. Residues 51 to 89 (GPTYCWDEAKNPGGPNRCSNSKQCDGARTCSSSGFCQGT) are SD2.

Has strong anti-HIV activity against T-tropic strains of HIV-1 and weaker activity against M-tropic strains of HIV-1. Inhibits HIV-1 fusion and infection of CD4 LTR beta-gal cells in vitro. Inhibits fusion of HIV infected CEM-SS cells with uninfected CEM-SS cells, and fusion of HIV-1 Env expressing HL2/3 cells with CD4 LTR beta-gal cells. Binds to HIV gp120, HIV gp160 and to a lesser extent HIV gp41. Binding to HIV gp120 is glycosylation dependent. Binds with high specificity to the tetrasaccharide Man-alpha-1,2-Man-alpha-1,6-Man-alpha-1,6-Man and also binds the higher-order oligosaccharides oligomannose 8 and oligomannose 9. Does not bind to monosaccharides, complex or hybrid N-linked oligosaccharides or chitin. The protein is Scytovirin of Scytonema varium.